Here is a 208-residue protein sequence, read N- to C-terminus: Urease accessory protein UreE (208 aa).

A disordered region spans residues 145-195 (AEAHGHGQAHAHDHHDHDHHDHGHDHAHHDHAHHDHAHDHHGHDHAHDHAH).

This sequence belongs to the UreE family.

It is found in the cytoplasm. Involved in urease metallocenter assembly. Binds nickel. Probably functions as a nickel donor during metallocenter assembly. This is Urease accessory protein UreE from Azorhizobium caulinodans (strain ATCC 43989 / DSM 5975 / JCM 20966 / LMG 6465 / NBRC 14845 / NCIMB 13405 / ORS 571).